Reading from the N-terminus, the 592-residue chain is Glycosyltransferase 25 family member (592 aa).

An N-terminal signal peptide occupies residues 1–13 (MLALLLTTTIVSG). Asn249 and Asn510 each carry an N-linked (GlcNAc...) asparagine glycan. 2 stretches are compositionally biased toward basic and acidic residues: residues 552–563 (RIQEPKKGDKEQ) and 579–592 (GEHDLETKNRRSEL). A disordered region spans residues 552 to 592 (RIQEPKKGDKEQLPNAPALLSESGIGQGEHDLETKNRRSEL). A Prevents secretion from ER motif is present at residues 589 to 592 (RSEL).

The protein belongs to the glycosyltransferase 25 family.

The protein localises to the endoplasmic reticulum lumen. This Anopheles gambiae (African malaria mosquito) protein is Glycosyltransferase 25 family member.